Here is a 465-residue protein sequence, read N- to C-terminus: Crh-like protein ARB_05253 (465 aa).

The signal sequence occupies residues 1–21; sequence MKLSLAAALLGALAVSAQTST. The GH16 domain maps to 22–223; it reads ECNPLKQKCP…WAGGETDFSK (202 aa). An intrachain disulfide couples Cys-23 to Cys-30. Glu-114 acts as the Nucleophile in catalysis. The active-site Proton donor is the Glu-118. Chitin-binding residues include Glu-118, Trp-200, and Thr-211. Disordered regions lie at residues 261-325 and 339-442; these read GQVN…STMT and TGTG…PGST. Asn-264 carries an N-linked (GlcNAc...) asparagine glycan. Positions 277 to 287 are enriched in low complexity; it reads SSTLPSSPSTS. Residues 304-325 are compositionally biased toward polar residues; the sequence is QAPNTGSSPSNTLTNGPSSTMT. Composition is skewed to low complexity over residues 339 to 348, 361 to 376, and 383 to 397; these read TGTGGVVTPT, TSRS…SASS, and MTTS…TGTG. The GPI-anchor amidated serine moiety is linked to residue Ser-441. The propeptide at 442–465 is removed in mature form; the sequence is TGAIHSVSNALLLSFCAIAAWALV.

This sequence belongs to the glycosyl hydrolase 16 family. CRH1 subfamily. In terms of processing, the GPI-anchor is attached to the protein in the endoplasmic reticulum and serves to target the protein to the cell surface. There, the glucosamine-inositol phospholipid moiety is cleaved off and the GPI-modified mannoprotein is covalently attached via its lipidless GPI glycan remnant to the 1,6-beta-glucan of the outer cell wall layer.

It is found in the secreted. The protein resides in the cell wall. It localises to the membrane. The catalysed reaction is Random endo-hydrolysis of N-acetyl-beta-D-glucosaminide (1-&gt;4)-beta-linkages in chitin and chitodextrins.. Functionally, dual chitinase/transglycosylase that plays a role in cell wall architecture. Chitinase and transglycosylase activities are coupled. Required for the polysaccharide cross-linking at the septa and the cell wall. More specifically, transfers chitin to 1,6-beta-glucan in the cell wall. The sequence is that of Crh-like protein ARB_05253 from Arthroderma benhamiae (strain ATCC MYA-4681 / CBS 112371) (Trichophyton mentagrophytes).